A 195-amino-acid polypeptide reads, in one-letter code: PE-PGRS family protein PE_PGRS61 (195 aa).

This sequence belongs to the mycobacterial PE family. PGRS subfamily. As to quaternary structure, interacts with human TLR2.

It is found in the secreted. Its subcellular location is the cell wall. It localises to the cell surface. Binding of Ca(2+) to PE_PGRS61 induces conformational changes and increases affinity for TLR2. Functionally, mediates Ca(2+)-dependent up-regulation of the anti-inflammatory cytokine IL-10. This Mycobacterium tuberculosis (strain ATCC 25618 / H37Rv) protein is PE-PGRS family protein PE_PGRS61.